A 425-amino-acid polypeptide reads, in one-letter code: Histidine--tRNA ligase (425 aa).

The protein belongs to the class-II aminoacyl-tRNA synthetase family. In terms of assembly, homodimer.

The protein resides in the cytoplasm. It carries out the reaction tRNA(His) + L-histidine + ATP = L-histidyl-tRNA(His) + AMP + diphosphate + H(+). This chain is Histidine--tRNA ligase, found in Streptococcus uberis (strain ATCC BAA-854 / 0140J).